Reading from the N-terminus, the 388-residue chain is UPF0229 protein BH1031 (388 aa).

Residues 80–117 (HVGQGDGDSQVGDVIARDPSAGQQGPGKGQGAGDQPGE) are disordered. The span at 103–113 (QGPGKGQGAGD) shows a compositional bias: gly residues.

Belongs to the UPF0229 family.

The chain is UPF0229 protein BH1031 from Halalkalibacterium halodurans (strain ATCC BAA-125 / DSM 18197 / FERM 7344 / JCM 9153 / C-125) (Bacillus halodurans).